Here is a 483-residue protein sequence, read N- to C-terminus: Phosphoglucosamine mutase (483 aa).

Ser-131 functions as the Phosphoserine intermediate in the catalytic mechanism. Mg(2+) contacts are provided by Ser-131, Asp-272, Asp-274, and Asp-276. A Phosphoserine modification is found at Ser-131.

The protein belongs to the phosphohexose mutase family. Requires Mg(2+) as cofactor. Activated by phosphorylation.

It catalyses the reaction alpha-D-glucosamine 1-phosphate = D-glucosamine 6-phosphate. Functionally, catalyzes the conversion of glucosamine-6-phosphate to glucosamine-1-phosphate. The polypeptide is Phosphoglucosamine mutase (Magnetococcus marinus (strain ATCC BAA-1437 / JCM 17883 / MC-1)).